Consider the following 204-residue polypeptide: MIAKLTGILDDTGPDWAVIDVNGVGYLVHCSAKTLTHLGLRGDKVVVHTEMQVSETDQRLIGFTSAGERAWFRLLTAVQGVGSKVALAILSALSVEELQRACAHGDSAMVARANGVGPKLASRIVNELKDKAGGLAGYASPVGPGGEAFVAPPGNASADAVSALQNLGFKPAVASSAVAAAVKELGEDAGLNDLVRVALKRAAG.

The tract at residues 1–64 is domain I; that stretch reads MIAKLTGILD…ETDQRLIGFT (64 aa). A domain II region spans residues 65-143; it reads SAGERAWFRL…GLAGYASPVG (79 aa). Residues 144-154 are flexible linker; the sequence is PGGEAFVAPPG. The interval 154-204 is domain III; the sequence is GNASADAVSALQNLGFKPAVASSAVAAAVKELGEDAGLNDLVRVALKRAAG.

It belongs to the RuvA family. In terms of assembly, homotetramer. Forms an RuvA(8)-RuvB(12)-Holliday junction (HJ) complex. HJ DNA is sandwiched between 2 RuvA tetramers; dsDNA enters through RuvA and exits via RuvB. An RuvB hexamer assembles on each DNA strand where it exits the tetramer. Each RuvB hexamer is contacted by two RuvA subunits (via domain III) on 2 adjacent RuvB subunits; this complex drives branch migration. In the full resolvosome a probable DNA-RuvA(4)-RuvB(12)-RuvC(2) complex forms which resolves the HJ.

It is found in the cytoplasm. Functionally, the RuvA-RuvB-RuvC complex processes Holliday junction (HJ) DNA during genetic recombination and DNA repair, while the RuvA-RuvB complex plays an important role in the rescue of blocked DNA replication forks via replication fork reversal (RFR). RuvA specifically binds to HJ cruciform DNA, conferring on it an open structure. The RuvB hexamer acts as an ATP-dependent pump, pulling dsDNA into and through the RuvAB complex. HJ branch migration allows RuvC to scan DNA until it finds its consensus sequence, where it cleaves and resolves the cruciform DNA. The polypeptide is Holliday junction branch migration complex subunit RuvA (Novosphingobium aromaticivorans (strain ATCC 700278 / DSM 12444 / CCUG 56034 / CIP 105152 / NBRC 16084 / F199)).